Here is a 555-residue protein sequence, read N- to C-terminus: Sulfite reductase [NADPH] hemoprotein beta-component (555 aa).

The [4Fe-4S] cluster site is built by Cys-430, Cys-436, Cys-475, and Cys-479. Residue Cys-479 participates in siroheme binding.

The protein belongs to the nitrite and sulfite reductase 4Fe-4S domain family. Alpha(8)-beta(8). The alpha component is a flavoprotein, the beta component is a hemoprotein. Requires siroheme as cofactor. It depends on [4Fe-4S] cluster as a cofactor.

The enzyme catalyses hydrogen sulfide + 3 NADP(+) + 3 H2O = sulfite + 3 NADPH + 4 H(+). It participates in sulfur metabolism; hydrogen sulfide biosynthesis; hydrogen sulfide from sulfite (NADPH route): step 1/1. Functionally, component of the sulfite reductase complex that catalyzes the 6-electron reduction of sulfite to sulfide. This is one of several activities required for the biosynthesis of L-cysteine from sulfate. This Leptospira biflexa serovar Patoc (strain Patoc 1 / Ames) protein is Sulfite reductase [NADPH] hemoprotein beta-component.